A 387-amino-acid chain; its full sequence is uncharacterized protein (387 aa).

This sequence belongs to the geranylgeranyl reductase family. ChlP subfamily.

This is an uncharacterized protein from Methanosarcina barkeri (strain Fusaro / DSM 804).